Reading from the N-terminus, the 617-residue chain is MASKKWPSFSVTKEFILRFNNTDNRVKEEELLEQARKFTVRCKRKLGLKTLGSGKHVHLPTAWAEVIYLAQCKGEIQDEALNMLYASLDHVSFDCDQLPTLFFLAESVLYRLCCDAFKKEYLYSVEIKLVKIGYLIFLRLFVFFLHGHLENFKQHLLRLQPYLYALYYSEPSYYKYPNILSSLQFILKTAEIICKRELHFEVFESLREVEDPFSDTNHVQLNKRGYEVNHLLWHSVAAWSCVQDNRPQLNAVLDHILFHKAQLQTKCWLDSALALLVLGEAAKLNMACLKTLMDLMTHFLLSPQSQEDYCSIYDIPWASDIVFIYTSIIAEVCLYAATSDLRKTALIGFCVCKDPQQDIHLTNKSEEMPELDGASILTLLKYFSSRISDNCAKVIWVGYYGIVYNLVKMSWELQGDEEQDGFRNMVWQTLQKIKDYEEDPRIQNAVTIAQAELNDAADPFSSKAAPNSEAFSKYIGWRIANTLSRLFFPSLDVSALPQKTPVETDLQRKHTISKRQPEKKGVVRIVMKEHPSVLELSMFPYPDFFTKADKKLEEVIDHHWQKDMETLKQIEAVCEAQNRKDEEEKEKIRFQEIMKQRERKLNKQTKPYEITPSEKKE.

A helical membrane pass occupies residues 129-149 (LVKIGYLIFLRLFVFFLHGHL). Residues 567–604 (LKQIEAVCEAQNRKDEEEKEKIRFQEIMKQRERKLNKQ) adopt a coiled-coil conformation. The interval 598-617 (ERKLNKQTKPYEITPSEKKE) is disordered.

It is found in the membrane. Functionally, plays a critical role for male fertility and sperm motility by regulating sperm cytoplasm removal and maintaining axoneme integrity. The polypeptide is Transmembrane protein 232 (Tmem232) (Rattus norvegicus (Rat)).